Reading from the N-terminus, the 265-residue chain is Shikimate dehydrogenase (NADP(+)) (265 aa).

Shikimate is bound by residues 15 to 17 and Thr62; that span reads SLS. Catalysis depends on Lys66, which acts as the Proton acceptor. 2 residues coordinate shikimate: Asn87 and Asp102. NADP(+) contacts are provided by residues 125-129, 149-154, and Leu209; these read GAGGA and NRTLEK. Tyr211 contributes to the shikimate binding site. Gly233 lines the NADP(+) pocket.

The protein belongs to the shikimate dehydrogenase family. Homodimer.

The enzyme catalyses shikimate + NADP(+) = 3-dehydroshikimate + NADPH + H(+). The protein operates within metabolic intermediate biosynthesis; chorismate biosynthesis; chorismate from D-erythrose 4-phosphate and phosphoenolpyruvate: step 4/7. Functionally, involved in the biosynthesis of the chorismate, which leads to the biosynthesis of aromatic amino acids. Catalyzes the reversible NADPH linked reduction of 3-dehydroshikimate (DHSA) to yield shikimate (SA). The sequence is that of Shikimate dehydrogenase (NADP(+)) from Legionella pneumophila (strain Lens).